The chain runs to 324 residues: D-alanine--D-alanine ligase (324 aa).

In terms of domain architecture, ATP-grasp spans 112–312 (KAVLAAAGVT…FDQLVLWIVE (201 aa)). Residue 139–193 (LQPPYVVKPNAEGSSVGVFIIKEGANRPPEEVGAPSWTFGEEVMVEPYIQGMELA) coordinates ATP. 3 residues coordinate Mg(2+): D265, E279, and N281.

This sequence belongs to the D-alanine--D-alanine ligase family. Mg(2+) is required as a cofactor. It depends on Mn(2+) as a cofactor.

Its subcellular location is the cytoplasm. It carries out the reaction 2 D-alanine + ATP = D-alanyl-D-alanine + ADP + phosphate + H(+). It functions in the pathway cell wall biogenesis; peptidoglycan biosynthesis. Functionally, cell wall formation. This chain is D-alanine--D-alanine ligase, found in Caulobacter vibrioides (strain ATCC 19089 / CIP 103742 / CB 15) (Caulobacter crescentus).